Consider the following 156-residue polypeptide: Ribosome maturation factor RimP (156 aa).

Belongs to the RimP family.

The protein resides in the cytoplasm. Functionally, required for maturation of 30S ribosomal subunits. In Bacillus mycoides (strain KBAB4) (Bacillus weihenstephanensis), this protein is Ribosome maturation factor RimP.